A 445-amino-acid polypeptide reads, in one-letter code: Argininosuccinate synthase (445 aa).

ATP contacts are provided by residues 17–25 and A43; that span reads AFSGGLDTS. Y99 provides a ligand contact to L-citrulline. ATP contacts are provided by G129 and T131. T131, N135, and D136 together coordinate L-aspartate. N135 is a binding site for L-citrulline. D136 is an ATP binding site. 2 residues coordinate L-citrulline: R139 and S192. D194 lines the ATP pocket. Residues T201, E203, and E280 each contribute to the L-citrulline site.

This sequence belongs to the argininosuccinate synthase family. Type 2 subfamily. In terms of assembly, homotetramer.

It is found in the cytoplasm. It catalyses the reaction L-citrulline + L-aspartate + ATP = 2-(N(omega)-L-arginino)succinate + AMP + diphosphate + H(+). The protein operates within amino-acid biosynthesis; L-arginine biosynthesis; L-arginine from L-ornithine and carbamoyl phosphate: step 2/3. The protein is Argininosuccinate synthase of Bradyrhizobium sp. (strain BTAi1 / ATCC BAA-1182).